The primary structure comprises 492 residues: Falcipain-3 (492 aa).

The Cytoplasmic segment spans residues 1–35; it reads MEYHMEYSPNEVIKQEREVFVGKEKSGSKFKRKRS. Residues 1–242 constitute a propeptide, activation peptide; it reads MEYHMEYSPN…LNLKTHGPFK (242 aa). The short motif at 16 to 25 is the Bipartite vacuolar targeting signal 1 element; it reads EREVFVGKEK. The chain crosses the membrane as a helical; Signal-anchor for type II membrane protein span at residues 36–56; that stretch reads IFIVLTVSICFMFALMLFYFT. Residues 57-492 are Lumenal-facing; sequence RNENNKTLFT…GTEAYVPLLE (436 aa). N61 is a glycosylation site (N-linked (GlcNAc...) asparagine). Positions 84-105 match the Bipartite vacuolar targeting signal 2 motif; that stretch reads KSESGKKFIVSKLEELISSYDK. N129 carries an N-linked (GlcNAc...) asparagine glycan. The short motif at 251–268 is the Nose motif; required for the correct folding of the mature form element; it reads EANYEDVIKKYKPADAKL. Intrachain disulfides connect C290–C331, C324–C365, C350–C370, and C419–C480. C293 is a catalytic residue. H425 is an active-site residue. An Arm motif; binds to host hemoglobin and required for the inhibitory interaction between the propeptide and the catalytic domain motif is present at residues 436–445; that stretch reads DIYNEDTGRM. N455 is a catalytic residue.

This sequence belongs to the peptidase C1 family. Post-translationally, auto-cleavage occurs at acidic pH. The proenzyme is the predominant form in late trophozoites and both the pro and mature enzyme are present in schizonts.

It is found in the membrane. It localises to the vacuole. The protein resides in the cytoplasmic vesicle membrane. With respect to regulation, inhibited by cysteine protease inhibitor ICP. Its function is as follows. Cysteine protease which cleaves native host hemoglobin and globin in the food vacuole during the asexual blood stage. Preferentially cleaves substrates which have an arginine at the P1 position and a leucine at the P2 position. This chain is Falcipain-3, found in Plasmodium falciparum (isolate 3D7).